A 1059-amino-acid chain; its full sequence is Zinc finger protein 628 (1059 aa).

6 C2H2-type zinc fingers span residues 36–58 (YECG…QRTH), 64–86 (YKCP…QRGH), 92–114 (YQCP…RSVH), 120–142 (FICG…LRQH), 148–170 (YPCP…RHVH), and 176–198 (YTCG…QRVH). Thr199 carries the post-translational modification Phosphothreonine. The C2H2-type 7 zinc-finger motif lies at 204–226 (FRCPLCPKTFTHSSNLLLHQRTH). Disordered stretches follow at residues 226-247 (HGAA…REPG), 260-280 (LQPH…PVVP), and 312-351 (EHQP…PAAA). The span at 228 to 237 (AAPAPGTASA) shows a compositional bias: low complexity. Over residues 263–279 (HSPPAPPAPPPPPPPVV) the composition is skewed to pro residues. Over residues 323–335 (PQPQEAPAEAPKA) the composition is skewed to low complexity. Positions 336 to 351 (DQPPSPLPQPPPPAAA) are enriched in pro residues. 7 consecutive C2H2-type zinc fingers follow at residues 356–378 (FACL…QHSH), 386–408 (FRCG…QQCH), 454–476 (YKCA…LRDH), 482–504 (YQCG…QRVH), 510–532 (FTCG…LRLH), 538–560 (YACG…RHVH), and 566–588 (HACG…QRVH). Residue Thr589 is modified to Phosphothreonine. C2H2-type zinc fingers lie at residues 594–616 (FRCP…QRTH) and 622–644 (FTCP…LRTH). The span at 644–658 (HAPANTPPSTTAPAA) shows a compositional bias: low complexity. The disordered stretch occupies residues 644–674 (HAPANTPPSTTAPAAGPQPPAPLAAARAPPA). 4 tandem repeats follow at residues 818–831 (VQLQ…EVTT), 832–842 (VQLQPAQEVTT), 843–853 (VQLQPAQEVTT), and 854–864 (VQLQPAQEVTT). A 4 X approximate tandem repeats region spans residues 818-864 (VQLQPLRPAPEVTTVQLQPAQEVTTVQLQPAQEVTTVQLQPAQEVTT). The tract at residues 943–1059 (DGEQTRLCVQ…LPAVQLVHTF (117 aa)) is interaction with TAF4B.

In terms of assembly, interacts with TAF4B.

The protein localises to the nucleus. Functionally, transcriptional activator. Binds DNA on GT-box consensus sequence 5'-TTGGTT-3'. Plays a role in spermiogenesis. This chain is Zinc finger protein 628 (ZNF628), found in Homo sapiens (Human).